A 1387-amino-acid chain; its full sequence is MEDLMTSYSFTEKKRIRKDFGKQRSILEVPFLLAIQVDSYREFLQEDVEPNKRKDLGLHAALKSVFPISSYSGNAALEYVGYKLGEPVFDERECRQRGMSYGAPLRVTVRLVIYDRESSTKAIKYVKEQEVYLGEIPLMTENGTFIVNGTERVIFSQLHRSPGVFFDHDRGKTHSSGKLLYSARIIPYRGSWLDFEFDPKDALFTRIDRRRKLPVSILLRALGYNNEEMLAEFFEINTFHINPDEGVQLELVPERLRGETLNFDLADGDKVIVEAGKRITARHVKQLEAAGVAALAVPDDYLVGRILSHDVVDGSTGELLANANDEISEDQLAAFRKAGVDAVGTLWVNDLDRGPYLSNTLRIDPTKTQLEALVEIYRMMRPGEPPTKEAAQNLFHNLFFTFERYDLSTVGRMKFNRRVGRKEVLGESVLYDKKYFAERNDEESKRLVAEHADTSDILEVIKVLTEIRNGRGVVDDIDHLGNRRVRSVGEMAENVFRVGLVRVERAVKERLSMAESEGLTPQELINAKPVAAAIKEFFGSSQLSQFMDQNNPLSEVTHKRRVSALGPGGLTRERAGFEVRDVHPTHYGRVCTIETPEGPNIGLINSLAVFARTNQYGFLETPYRKVLDGKVSDDVEYLSAIEENEYVIAQANALTDAKNMLTEQFVPCRFQGESLLKPPAEVHFMDVSPMQTVSVAAALVPFLEHDDANRALMGANMQRQAVPTLRSQKPLVGTGIERAVARDSGVTVNARRGGVIEQIDAARIVVKVNEAEIGGGTDAGVDIYNLIKYTRSNQNTCINQRPLVNVGDVIARGDVLADGPSTDIGELALGQNMLIAFMPWNGYNFEDSILLSERVVEEDRYTTIHIEELTCVARDTKLGPEEISADIPNVSEQALNRLDESGVVYIGAEVRAGDIMVGKVTPKGESQLTPEEKLLRAIFGEKASDVKDSSLRVPPGMDGTVIDVQVFTRDGIEKDKRARQIEESEIKRVKKDFDDQFRILEAAIYARLRSQIVGKVANGGPNLKKGDNVTDAYLDGLKKSDWFQLRMKDDDAADAIERAQKQIQAHEKEFEARFADKRGKITQGDDLAPGVLKMVKVFLAVKRRIQPGDKMAGRHGNKGVVSNVVPVEDMPYMATGEPVDIVLNPLGVPSRMNIGQILEVHLGWAAKGLGRKIQRMLEAQTAVSELRKFLDDIYNHDSAINAERVDLSQFSDEELLNLGKNLIDGVPMATPVFDGASEAEIKRMLELAELPQSGQTQLYDGRTGEAFDRKTTVGYMHYLKLNHLVDDKMHARSTGPYSLVTQQPLGGKAQFGGQRFGEMEVWALEAYGAAYTLQEMLTVKSDDVQGRNQMYKNIVDGEHEMVAGMPESFNVLVKEIRSLAINMELEE.

This sequence belongs to the RNA polymerase beta chain family. In terms of assembly, the RNAP catalytic core consists of 2 alpha, 1 beta, 1 beta' and 1 omega subunit. When a sigma factor is associated with the core the holoenzyme is formed, which can initiate transcription.

It carries out the reaction RNA(n) + a ribonucleoside 5'-triphosphate = RNA(n+1) + diphosphate. In terms of biological role, DNA-dependent RNA polymerase catalyzes the transcription of DNA into RNA using the four ribonucleoside triphosphates as substrates. This chain is DNA-directed RNA polymerase subunit beta, found in Xanthomonas campestris pv. campestris (strain ATCC 33913 / DSM 3586 / NCPPB 528 / LMG 568 / P 25).